Reading from the N-terminus, the 316-residue chain is Ribose-phosphate pyrophosphokinase (316 aa).

ATP contacts are provided by residues 41–43 (DGE) and 100–101 (RQ). 2 residues coordinate Mg(2+): His-134 and Asp-174. The active site involves Lys-197. D-ribose 5-phosphate is bound by residues Arg-199, Asp-223, and 227–231 (DTAGT).

This sequence belongs to the ribose-phosphate pyrophosphokinase family. Class I subfamily. As to quaternary structure, homohexamer. Mg(2+) serves as cofactor.

The protein resides in the cytoplasm. It catalyses the reaction D-ribose 5-phosphate + ATP = 5-phospho-alpha-D-ribose 1-diphosphate + AMP + H(+). It functions in the pathway metabolic intermediate biosynthesis; 5-phospho-alpha-D-ribose 1-diphosphate biosynthesis; 5-phospho-alpha-D-ribose 1-diphosphate from D-ribose 5-phosphate (route I): step 1/1. Its function is as follows. Involved in the biosynthesis of the central metabolite phospho-alpha-D-ribosyl-1-pyrophosphate (PRPP) via the transfer of pyrophosphoryl group from ATP to 1-hydroxyl of ribose-5-phosphate (Rib-5-P). This Caldanaerobacter subterraneus subsp. tengcongensis (strain DSM 15242 / JCM 11007 / NBRC 100824 / MB4) (Thermoanaerobacter tengcongensis) protein is Ribose-phosphate pyrophosphokinase.